The primary structure comprises 197 residues: Recombination protein RecR (197 aa).

Residues 57–72 (CSRCGYLTDFDPCLIC) form a C4-type zinc finger. The region spanning 80–174 (SLICIGEESS…KVTRLAHGLP (95 aa)) is the Toprim domain.

This sequence belongs to the RecR family.

Its function is as follows. May play a role in DNA repair. It seems to be involved in an RecBC-independent recombinational process of DNA repair. It may act with RecF and RecO. In Syntrophomonas wolfei subsp. wolfei (strain DSM 2245B / Goettingen), this protein is Recombination protein RecR.